The following is a 358-amino-acid chain: Serine/threonine-protein phosphatase 2A activator 2 (358 aa).

Belongs to the PTPA-type PPIase family.

It localises to the cytoplasm. The enzyme catalyses [protein]-peptidylproline (omega=180) = [protein]-peptidylproline (omega=0). PPIases accelerate the folding of proteins. It catalyzes the cis-trans isomerization of proline imidic peptide bonds in oligopeptides. Acts as a regulatory subunit for PP2A-like phosphatases modulating their activity or substrate specificity, probably by inducing a conformational change in the catalytic subunit, a direct target of the PPIase. Can reactivate inactive phosphatase PP2A-phosphatase methylesterase complexes (PP2Ai) in presence of ATP and Mg(2+) by dissociating the inactive form from the complex. In Candida glabrata (strain ATCC 2001 / BCRC 20586 / JCM 3761 / NBRC 0622 / NRRL Y-65 / CBS 138) (Yeast), this protein is Serine/threonine-protein phosphatase 2A activator 2 (RRD2).